Reading from the N-terminus, the 761-residue chain is Copper-exporting P-type ATPase (761 aa).

Position 2 is an N-acetylthreonine (Thr2). An HMA domain is found at Gln14 to Asp78. Cu(+) is bound by residues Cys25 and Cys28. A run of 6 helical transmembrane segments spans residues Leu102–Val122, Gly129–Phe149, Met164–Phe184, Leu199–Val219, Val361–Gly381, and Ala387–Thr407. Residue Asp443 is the 4-aspartylphosphate intermediate of the active site. 2 helical membrane-spanning segments follow: residues Met695–Leu714 and Val718–Leu735.

Belongs to the cation transport ATPase (P-type) (TC 3.A.3) family. Type IB subfamily.

It localises to the cell membrane. The enzyme catalyses Cu(+)(in) + ATP + H2O = Cu(+)(out) + ADP + phosphate + H(+). Its activity is regulated as follows. ATPase activity is stimulated by Cu(+) ions. Its function is as follows. Involved in copper export. Could be involved in the copper detoxification of mycobacterial cells. The protein is Copper-exporting P-type ATPase (ctpA) of Mycobacterium tuberculosis (strain ATCC 25618 / H37Rv).